The sequence spans 125 residues: Protein MGF 360-9L (125 aa).

It belongs to the asfivirus MGF 360 family. As to quaternary structure, interacts with host STAT1; this interaction mediates STAT1 degradation through apoptosis. Interacts with host STAT2; this interaction mediates STAT2 degradation through the proteasome.

The protein localises to the host cytoplasm. Functionally, plays a role in virus cell tropism, and may be required for efficient virus replication in macrophages. In addition, inhibits IFN-beta-induced IFN-stimulated genes (ISGs) transcription. Mechanistically, degrades host STAT1 and STAT2 through apoptosis and ubiquitin-proteasome pathways respectively. This is Protein MGF 360-9L from African swine fever virus (strain Badajoz 1971 Vero-adapted) (Ba71V).